Consider the following 260-residue polypeptide: MPNLLEKTRKITSILQRSVDSLETELPYNTMASRLADIIDCNACIINGGGTLLGYAMKYKTNTDRVEEFFEAKQFPDTYVKAASRVYDTEANLSVENELTIFPVESKDTYPGGLTTIAPIYGGGMRLGSLIIWRNDDEFSDDDLILVEISSTVVGIQLLNLQTENLEDTIRKQTAVNMAINTLSYSEMKAVAAILGELDGNEGRLTASVIADRIGITRSVIVNALRKLESAGIIESRSLGMKGTYLKVINEGIFAKLKEF.

The interval 1–159 is GAF domain; that stretch reads MPNLLEKTRK…SSTVVGIQLL (159 aa). The H-T-H motif DNA-binding region spans 207–226; that stretch reads ASVIADRIGITRSVIVNALR.

It belongs to the CodY family.

The protein resides in the cytoplasm. Its function is as follows. DNA-binding global transcriptional regulator which is involved in the adaptive response to starvation and acts by directly or indirectly controlling the expression of numerous genes in response to nutrient availability. During rapid exponential growth, CodY is highly active and represses genes whose products allow adaptation to nutrient depletion. The sequence is that of Global transcriptional regulator CodY from Streptococcus pyogenes serotype M4 (strain MGAS10750).